We begin with the raw amino-acid sequence, 205 residues long: Probable anaerobic dimethyl sulfoxide reductase chain YnfG (205 aa).

4Fe-4S ferredoxin-type domains follow at residues 5–33 (YGFF…LGPE), 59–89 (FAYY…KRED), and 90–119 (GFVV…YNAE). Cys14, Cys17, Cys20, Cys24, Cys67, Cys70, Cys75, Cys79, Cys99, Cys102, Cys105, Cys109, Cys126, Cys129, Cys141, and Cys145 together coordinate [4Fe-4S] cluster. Positions 183 to 205 (IKPNANSRPTGDTTGYLANPEEV) are disordered. The span at 186 to 195 (NANSRPTGDT) shows a compositional bias: polar residues.

As to quaternary structure, the complex consists of three subunits: YnfF, the reductase; YnfG, an electron transfer protein, and YnfH, a membrane anchor protein. The cofactor is [4Fe-4S] cluster.

Electron transfer subunit of the terminal reductase during anaerobic growth on various sulfoxide and N-oxide compounds. In Escherichia coli O6:H1 (strain CFT073 / ATCC 700928 / UPEC), this protein is Probable anaerobic dimethyl sulfoxide reductase chain YnfG (ynfG).